A 213-amino-acid polypeptide reads, in one-letter code: MNNLSYFTKTKLVWVILSLSLLSACATKTPDNLIPVQVNHVSQAQAWEMQGKLAVRTADDKFSTNLYWLHTADINELKLTTMLGTTLLSLTTEEGVAKLEVDGKVYQHDDAQELLTEITGWSIPVNALPLWITGQAAQDDKIINQDLQLRPTVLLSEKDSPPWRVEFNSWQKQSGAEIPRLLELTREQLRLKIQISQWQALSATTLATNNQKK.

The N-terminal stretch at 1–24 (MNNLSYFTKTKLVWVILSLSLLSA) is a signal peptide. Cys25 carries the N-palmitoyl cysteine lipid modification. Cys25 carries the S-diacylglycerol cysteine lipid modification.

The protein belongs to the LolB family. In terms of assembly, monomer.

The protein resides in the cell outer membrane. In terms of biological role, plays a critical role in the incorporation of lipoproteins in the outer membrane after they are released by the LolA protein. The protein is Outer-membrane lipoprotein LolB of Shewanella woodyi (strain ATCC 51908 / MS32).